Consider the following 341-residue polypeptide: S-adenosylmethionine:tRNA ribosyltransferase-isomerase (341 aa).

The protein belongs to the QueA family. Monomer.

It localises to the cytoplasm. It catalyses the reaction 7-aminomethyl-7-carbaguanosine(34) in tRNA + S-adenosyl-L-methionine = epoxyqueuosine(34) in tRNA + adenine + L-methionine + 2 H(+). The protein operates within tRNA modification; tRNA-queuosine biosynthesis. Transfers and isomerizes the ribose moiety from AdoMet to the 7-aminomethyl group of 7-deazaguanine (preQ1-tRNA) to give epoxyqueuosine (oQ-tRNA). In Desulforamulus reducens (strain ATCC BAA-1160 / DSM 100696 / MI-1) (Desulfotomaculum reducens), this protein is S-adenosylmethionine:tRNA ribosyltransferase-isomerase.